The sequence spans 225 residues: ATP-dependent Clp protease proteolytic subunit (225 aa).

Ser-123 acts as the Nucleophile in catalysis. His-148 is an active-site residue.

This sequence belongs to the peptidase S14 family. As to quaternary structure, fourteen ClpP subunits assemble into 2 heptameric rings which stack back to back to give a disk-like structure with a central cavity, resembling the structure of eukaryotic proteasomes.

Its subcellular location is the cytoplasm. It catalyses the reaction Hydrolysis of proteins to small peptides in the presence of ATP and magnesium. alpha-casein is the usual test substrate. In the absence of ATP, only oligopeptides shorter than five residues are hydrolyzed (such as succinyl-Leu-Tyr-|-NHMec, and Leu-Tyr-Leu-|-Tyr-Trp, in which cleavage of the -Tyr-|-Leu- and -Tyr-|-Trp bonds also occurs).. Its function is as follows. Cleaves peptides in various proteins in a process that requires ATP hydrolysis. Has a chymotrypsin-like activity. Plays a major role in the degradation of misfolded proteins. The protein is ATP-dependent Clp protease proteolytic subunit of Chlorobium luteolum (strain DSM 273 / BCRC 81028 / 2530) (Pelodictyon luteolum).